Reading from the N-terminus, the 398-residue chain is Acetate kinase (398 aa).

Asn9 is a binding site for Mg(2+). Position 16 (Lys16) interacts with ATP. Arg90 lines the substrate pocket. Residue Asp147 is the Proton donor/acceptor of the active site. ATP is bound by residues 207–211 (HIGNG), 282–284 (DLR), and 330–334 (GVGEN). Glu384 contributes to the Mg(2+) binding site.

Belongs to the acetokinase family. As to quaternary structure, homodimer. Mg(2+) serves as cofactor. It depends on Mn(2+) as a cofactor.

The protein localises to the cytoplasm. The enzyme catalyses acetate + ATP = acetyl phosphate + ADP. It participates in metabolic intermediate biosynthesis; acetyl-CoA biosynthesis; acetyl-CoA from acetate: step 1/2. Functionally, catalyzes the formation of acetyl phosphate from acetate and ATP. Can also catalyze the reverse reaction. The polypeptide is Acetate kinase (Staphylococcus haemolyticus (strain JCSC1435)).